We begin with the raw amino-acid sequence, 146 residues long: Regulator of ribonuclease activity B (146 aa).

Positions 110–146 (WGTYFEDPDGEEEEGDEFDQDDEDGPADRDEVPATRH) are disordered. The segment covering 115–134 (EDPDGEEEEGDEFDQDDEDG) has biased composition (acidic residues). Over residues 135–146 (PADRDEVPATRH) the composition is skewed to basic and acidic residues.

This sequence belongs to the RraB family. As to quaternary structure, interacts with the C-terminal region of Rne.

Its subcellular location is the cytoplasm. Functionally, globally modulates RNA abundance by binding to RNase E (Rne) and regulating its endonucleolytic activity. Can modulate Rne action in a substrate-dependent manner by altering the composition of the degradosome. In Sodalis glossinidius (strain morsitans), this protein is Regulator of ribonuclease activity B.